The sequence spans 95 residues: Turripeptide OL184 (95 aa).

Post-translationally, contains 5 disulfide bonds. As to expression, expressed by the venom duct.

The protein resides in the secreted. Functionally, acts as a neurotoxin by inhibiting an ion channel. This chain is Turripeptide OL184, found in Iotyrris olangoensis (Sea snail).